The primary structure comprises 239 residues: Large ribosomal subunit protein bL25 (239 aa).

A disordered region spans residues 211-239 (KGKKDKEDEEAEKGTSVASPTTATGGTKK). Polar residues predominate over residues 226-239 (SVASPTTATGGTKK).

This sequence belongs to the bacterial ribosomal protein bL25 family. CTC subfamily. In terms of assembly, part of the 50S ribosomal subunit; part of the 5S rRNA/L5/L18/L25 subcomplex. Contacts the 5S rRNA. Binds to the 5S rRNA independently of L5 and L18.

In terms of biological role, this is one of the proteins that binds to the 5S RNA in the ribosome where it forms part of the central protuberance. The polypeptide is Large ribosomal subunit protein bL25 (Endomicrobium trichonymphae).